An 86-amino-acid chain; its full sequence is Large ribosomal subunit protein uL23 (86 aa).

Belongs to the universal ribosomal protein uL23 family. Part of the 50S ribosomal subunit. Contacts protein L29.

Its function is as follows. Binds to 23S rRNA. One of the proteins that surrounds the polypeptide exit tunnel on the outside of the ribosome. The protein is Large ribosomal subunit protein uL23 of Pyrococcus furiosus (strain ATCC 43587 / DSM 3638 / JCM 8422 / Vc1).